We begin with the raw amino-acid sequence, 364 residues long: tRNA-specific 2-thiouridylase MnmA 1 (364 aa).

Residues G10–S17 and M36 contribute to the ATP site. The Nucleophile role is filled by C106. C106 and C204 are oxidised to a cystine. ATP is bound at residue G130. The segment at K154–Q156 is interaction with tRNA. C204 (cysteine persulfide intermediate) is an active-site residue. The tract at residues R310–Y311 is interaction with tRNA.

This sequence belongs to the MnmA/TRMU family.

It is found in the cytoplasm. It catalyses the reaction S-sulfanyl-L-cysteinyl-[protein] + uridine(34) in tRNA + AH2 + ATP = 2-thiouridine(34) in tRNA + L-cysteinyl-[protein] + A + AMP + diphosphate + H(+). Its function is as follows. Catalyzes the 2-thiolation of uridine at the wobble position (U34) of tRNA, leading to the formation of s(2)U34. This is tRNA-specific 2-thiouridylase MnmA 1 from Thermoanaerobacter sp. (strain X514).